The sequence spans 423 residues: Glucose-1-phosphate adenylyltransferase 1 (423 aa).

Alpha-D-glucose 1-phosphate-binding positions include Tyr111, Gly176, 191 to 192 (EK), and Ser209.

It belongs to the bacterial/plant glucose-1-phosphate adenylyltransferase family. In terms of assembly, homotetramer.

It carries out the reaction alpha-D-glucose 1-phosphate + ATP + H(+) = ADP-alpha-D-glucose + diphosphate. It functions in the pathway glycan biosynthesis; glycogen biosynthesis. In terms of biological role, involved in the biosynthesis of ADP-glucose, a building block required for the elongation reactions to produce glycogen. Catalyzes the reaction between ATP and alpha-D-glucose 1-phosphate (G1P) to produce pyrophosphate and ADP-Glc. This chain is Glucose-1-phosphate adenylyltransferase 1, found in Alkalilimnicola ehrlichii (strain ATCC BAA-1101 / DSM 17681 / MLHE-1).